We begin with the raw amino-acid sequence, 742 residues long: Catalase-peroxidase (742 aa).

The tract at residues 1–43 is disordered; sequence MSDSCPVAHEGNTQSTSESENPVIPSPTPAANRPRNNRDWWPN. A compositionally biased stretch (polar residues) spans 11 to 20; it reads GNTQSTSESE. The segment at residues 109-231 is a cross-link (tryptophyl-tyrosyl-methioninium (Trp-Tyr) (with M-257)); the sequence is WHAAGTYRIA…LGAVQMGLIY (123 aa). The active-site Proton acceptor is His-110. Positions 231-257 form a cross-link, tryptophyl-tyrosyl-methioninium (Tyr-Met) (with W-109); the sequence is YVNPEGPNGQPDPLAAARDIRETFSRM. His-272 serves as a coordination point for heme b.

Belongs to the peroxidase family. Peroxidase/catalase subfamily. In terms of assembly, homodimer or homotetramer. The cofactor is heme b. In terms of processing, formation of the three residue Trp-Tyr-Met cross-link is important for the catalase, but not the peroxidase activity of the enzyme.

It carries out the reaction H2O2 + AH2 = A + 2 H2O. The enzyme catalyses 2 H2O2 = O2 + 2 H2O. Functionally, bifunctional enzyme with both catalase and broad-spectrum peroxidase activity. This chain is Catalase-peroxidase, found in Rhodococcus jostii (strain RHA1).